The primary structure comprises 212 residues: Probable transaldolase (212 aa).

Lysine 84 (schiff-base intermediate with substrate) is an active-site residue.

Belongs to the transaldolase family. Type 3B subfamily.

It is found in the cytoplasm. The catalysed reaction is D-sedoheptulose 7-phosphate + D-glyceraldehyde 3-phosphate = D-erythrose 4-phosphate + beta-D-fructose 6-phosphate. Its pathway is carbohydrate degradation; pentose phosphate pathway; D-glyceraldehyde 3-phosphate and beta-D-fructose 6-phosphate from D-ribose 5-phosphate and D-xylulose 5-phosphate (non-oxidative stage): step 2/3. In terms of biological role, transaldolase is important for the balance of metabolites in the pentose-phosphate pathway. The sequence is that of Probable transaldolase from Bacillus velezensis (strain DSM 23117 / BGSC 10A6 / LMG 26770 / FZB42) (Bacillus amyloliquefaciens subsp. plantarum).